Here is a 305-residue protein sequence, read N- to C-terminus: Oxygen-dependent coproporphyrinogen-III oxidase (305 aa).

Residue Ser-93 participates in substrate binding. 2 residues coordinate a divalent metal cation: His-97 and His-107. His-107 serves as the catalytic Proton donor. 109-111 (NVR) contacts substrate. 2 residues coordinate a divalent metal cation: His-146 and His-176. The segment at 241–276 (YVEFNLVFDRGTLFGLQSGGRTESILMSLPPQVRWG) is important for dimerization. 259–261 (GGR) provides a ligand contact to substrate.

This sequence belongs to the aerobic coproporphyrinogen-III oxidase family. In terms of assembly, homodimer. The cofactor is a divalent metal cation.

The protein resides in the cytoplasm. The enzyme catalyses coproporphyrinogen III + O2 + 2 H(+) = protoporphyrinogen IX + 2 CO2 + 2 H2O. The protein operates within porphyrin-containing compound metabolism; protoporphyrin-IX biosynthesis; protoporphyrinogen-IX from coproporphyrinogen-III (O2 route): step 1/1. Its function is as follows. Involved in the heme biosynthesis. Catalyzes the aerobic oxidative decarboxylation of propionate groups of rings A and B of coproporphyrinogen-III to yield the vinyl groups in protoporphyrinogen-IX. This Pseudomonas aeruginosa (strain LESB58) protein is Oxygen-dependent coproporphyrinogen-III oxidase.